Reading from the N-terminus, the 508-residue chain is MNSTPSAPPLKMEALDLDIFQPSLTLGLGAILVVLMSFLAFLSYTPSFDKKVPAFTTHTHPFIGAADFMWRKNHFWRASMEESKTGTFSFWVGKKHVVGLSGEAARKTFMDSPGLDFVGGARIRGVSLLPNPPTPEIFRPGFHHGRSFFLRRMIDMQKTEMLKRCLPRFTSDSRGVFDELAKDPSGITNPAVACWHVVFAHDVILFCSEEIVDDPKAFPNLLQMIDILQGLSSFTKVFLPWLPTMAGMTRARRYKYMKSIFEPLVDRRMKRGAIRREDSLQLMIDNGDRRDLIIDFVIAAVIIAPTNSRILTGQMLNVMAAYPSWQEKAYAEIKALAKSYAKDPEAPLADQLDSMPLEAWEAGFPSIDLCFKELVRMWVAISMMRRNISSRTDEFIPAGSFAIYNTTETHFSEELYPDPHTFKPERWLEGNANVQKQAYGFVGWGEGRHPCPGKRWAKLQLNITIAYALAKFKWTSVDKTEHKKSTQESGHGVPLPSKLSKFSPREEN.

Residues 24–44 (LTLGLGAILVVLMSFLAFLSY) traverse the membrane as a helical segment. Asparagine 387 and asparagine 405 each carry an N-linked (GlcNAc...) asparagine glycan. Position 451 (cysteine 451) interacts with heme. Residue asparagine 462 is glycosylated (N-linked (GlcNAc...) asparagine). Residues 481–508 (EHKKSTQESGHGVPLPSKLSKFSPREEN) form a disordered region.

It belongs to the cytochrome P450 family. Heme is required as a cofactor.

It is found in the membrane. It functions in the pathway secondary metabolite biosynthesis. Its function is as follows. Cytochrome P450 monooxygenase; part of the gene cluster that mediates the biosynthesis of the dimeric xanthones cryptosporioptides. The pathway begins with the synthesis of atrochrysone thioester by the polyketide synthase dmx-nrPKS. The atrochrysone carboxyl ACP thioesterase dmxR1 then breaks the thioester bond and releases the atrochrysone carboxylic acid from dmx-nrPKS. Atrochrysone carboxylic acid is decarboxylated by the decarboxylase dmxR15, and oxidized by the anthrone oxygenase dmxR16 to yield emodin. Emodin is then reduced to emodin hydroquinone by the oxidoreductase dmxR7. A-ring reduction by the short chain dehydrogenase dmxR18, dehydration by the scytalone dehydratase-like protein dmxR17 and probable spontaneous re-oxidation, results in overall deoxygenation to chrysophanol. Baeyer-Villiger oxidation by the Baeyer-Villiger monooxygenase (BVMO) dmxR6 then yields monodictylactone in equilibrium with monodictyphenone. In the case of the cryptosporioptides biosynthesis, monodictylactone is reduced at C-12 to an alcohol (by the short chain dehydrogenases dmxR12 or dmxR8) and hydroxylated at C-5 by dmxR9, yielding the electron-rich aromatic which could eliminate H(2)O to form the ortho-quinonemethide, followed by tautomerisation to paraquinone and complete the formal reduction to produce the 10-methylgroup. Conjugate addition of C-4a-OH to the resulting paraquinone by the monooxygenase dmxR10 then gives cyclohexadienone, which is then reduced at C-5 by the short chain dehydrogenase dmxR3 to give the dihydroxanthone. The 6,7-epoxide in the cryptosporioptides could be introduced by the cytochrome P450 monooxygenase dmxL3. The highly reducing PKS dmxL2 manufactures butyrate, which is further carboxylated by dmxL1 to form ethylmalonate. It is not yet clear whether the carboxylation occurs while the butyrate is attached to the ACP of dmxL2, but this unusual fungal metabolite could then be esterified to O-5 by the O-acetyltransferase dmxR13. Finally, dimerization performed by dmxR5 gives the observed dimers cryptosporioptides A, B and C as the final products of the pathway. The sequence is that of Cytochrome P450 monooxygenase dmxR5 from Cryptosporiopsis sp. (strain 8999).